Reading from the N-terminus, the 165-residue chain is UPF0179 protein Igni_1272 (165 aa).

Belongs to the UPF0179 family.

The chain is UPF0179 protein Igni_1272 from Ignicoccus hospitalis (strain KIN4/I / DSM 18386 / JCM 14125).